The following is a 473-amino-acid chain: Spliceosome-associated protein CWC27 homolog (473 aa).

At Ser2 the chain carries N-acetylserine. A PPIase cyclophilin-type domain is found at 11–166; the sequence is TNGKVLLKTT…NPHKIKSCEV (156 aa). A compositionally biased stretch (basic and acidic residues) spans 177–193; it reads REIKRPKKEKPEEEVKK. 2 disordered regions span residues 177-386 and 399-473; these read REIK…EDQT and QAIA…KERR. Positions 206–230 form a coiled coil; that stretch reads SFGEEAEEEEEEVNRVSQSMKGKSK. A compositionally biased stretch (basic and acidic residues) spans 231 to 241; the sequence is SSHDLLKDDPH. Residues 257–266 show a composition bias toward acidic residues; sequence GDLDDGGEGE. Composition is skewed to basic and acidic residues over residues 267 to 287, 305 to 348, and 360 to 372; these read SAEH…ERIA, EVEK…KRSE, and EYRR…EALR. Residues 305-378 adopt a coiled-coil conformation; sequence EVEKKSVNRS…EALRKQQSKK (74 aa). At Ser347 the chain carries Phosphoserine. A compositionally biased stretch (acidic residues) spans 405–419; it reads PENDIPETEVEDDEG. Composition is skewed to basic and acidic residues over residues 426–438 and 458–473; these read QFED…KDAS and RREE…KERR.

It belongs to the cyclophilin-type PPIase family. Part of the activated spliceosome B/catalytic step 1 spliceosome, one of the forms of the spliceosome which has a well-formed active site but still cannot catalyze the branching reaction and is composed at least of 52 proteins, the U2, U5 and U6 snRNAs and the pre-mRNA. Recruited during early steps of activated spliceosome B maturation, it is probably one of the first proteins released from this complex as he matures to the spliceosome C complex. Component of the minor spliceosome, which splices U12-type introns.

The protein resides in the nucleus. Functionally, as part of the spliceosome, plays a role in pre-mRNA splicing. Probable inactive PPIase with no peptidyl-prolyl cis-trans isomerase activity. As a component of the minor spliceosome, involved in the splicing of U12-type introns in pre-mRNAs. In Pongo abelii (Sumatran orangutan), this protein is Spliceosome-associated protein CWC27 homolog.